Here is a 367-residue protein sequence, read N- to C-terminus: Tubulin-like protein CetZ (367 aa).

Residues 11-15 (QCGNR), Ser111, 115-117 (GTG), Glu148, Asn176, and Asn194 each bind GTP.

Belongs to the CetZ family.

Its subcellular location is the cytoplasm. In terms of biological role, involved in cell shape control. In Methanothrix thermoacetophila (strain DSM 6194 / JCM 14653 / NBRC 101360 / PT) (Methanosaeta thermophila), this protein is Tubulin-like protein CetZ.